Reading from the N-terminus, the 224-residue chain is Paired immunoglobulin-like type 2 receptor beta (224 aa).

An N-terminal signal peptide occupies residues 1 to 28; that stretch reads MALLISLPGGTPAMAQVLLLLSSGCLHA. Residues 29-195 lie on the Extracellular side of the membrane; the sequence is GNSERYNRKN…NPSLMNLGAM (167 aa). Residues asparagine 90, asparagine 107, and asparagine 154 are each glycosylated (N-linked (GlcNAc...) asparagine). The helical transmembrane segment at 196-216 threads the bilayer; the sequence is VTMLLAKVLVIVLVYGWMIFL. Residues 217-224 lie on the Cytoplasmic side of the membrane; it reads RWKQRPAH.

As to quaternary structure, interacts with CD99. Probably associates with DAP12. Widely expressed with highest levels in spleen, liver and lung. Predominantly expressed by natural killer cells, macrophages, and granulocytes and dendritic cells (BM-DC).

It localises to the membrane. Functionally, paired receptors consist of highly related activating and inhibitory receptors and are widely involved in the regulation of the immune system. PILRB is thought to act as a cellular signaling activating receptor that associates with ITAM-bearing adapter molecules on the cell surface. Seems to associate with DAP12 and is a receptor for CD99. May be involved in target cell recognition by natural killer cells and in activation of dendritic cells. The polypeptide is Paired immunoglobulin-like type 2 receptor beta (Pilrb) (Mus musculus (Mouse)).